Consider the following 306-residue polypeptide: Choline-binding protein (306 aa).

The signal sequence occupies residues 1 to 22; sequence MKRKYLKLMIGLALAATLTLSG. C23 is lipidated: N-palmitoyl cysteine. A lipid anchor (S-diacylglycerol cysteine) is attached at C23.

This sequence belongs to the OsmX family.

The protein localises to the cell membrane. Functionally, member of a high affinity multicomponent binding-protein-dependent transport system for choline. The sequence is that of Choline-binding protein (opuBC) from Bacillus subtilis (strain 168).